Consider the following 297-residue polypeptide: Probable replication protein rep (297 aa).

Belongs to the initiator RepB protein family.

In Bifidobacterium longum (strain NCC 2705), this protein is Probable replication protein rep (rep).